Reading from the N-terminus, the 1134-residue chain is Ubinuclein-1 (1134 aa).

Disordered regions lie at residues 1–38 (MSEP…HQDC) and 78–98 (LQPG…EKER). The interval 1-166 (MSEPHRVQFT…YGGFYINSGT (166 aa)) is sufficient for interaction with HIRA. 2 stretches are compositionally biased toward basic and acidic residues: residues 25–38 (RKEE…HQDC) and 81–98 (GDKK…EKER). Thr166 is modified (phosphothreonine). Residues 171–220 (QASESEDDFIKEKKKKSPKKRKLKEGGEKIKKKKKDDTYDKEKKSKKSKF) are disordered. 2 positions are modified to phosphoserine: Ser173 and Ser175. Residues 182–193 (EKKKKSPKKRKL) show a composition bias toward basic residues. Basic and acidic residues predominate over residues 194–213 (KEGGEKIKKKKKDDTYDKEK). Position 222 is an N6-acetyllysine (Lys222). The span at 253–268 (QKEKEAQKKREEEHKP) shows a compositional bias: basic and acidic residues. 4 disordered regions span residues 253–282 (QKEK…LREL), 321–358 (SESP…EGLP), 480–504 (EEEK…KGGR), and 594–660 (PSKI…LEDS). A phosphoserine mark is found at Ser323, Ser336, Ser338, and Ser493. A coiled-coil region spans residues 479–542 (LEEEKDKEQR…SQDLERNNKA (64 aa)). Composition is skewed to basic and acidic residues over residues 480-493 (EEEK…RICS) and 598-610 (KVKE…DKKV). Phosphoserine is present on residues Ser660 and Ser677. Disordered regions lie at residues 712-836 (TEEK…SPTQ) and 852-986 (QGFH…GVAK). 2 stretches are compositionally biased toward low complexity: residues 792–804 (GPQV…GPQV) and 856–891 (PSAP…KPHS). Polar residues predominate over residues 892-905 (VSSAGSSYKNNPFA). A compositionally biased stretch (low complexity) spans 906 to 932 (SSISKHGVSSGSSSSGGTPVQSSVSGS). The segment covering 941–950 (SVGQATSRPV) has biased composition (polar residues). The span at 973–982 (PNGDSSGGTQ) shows a compositional bias: gly residues. Ser1025 is modified (phosphoserine). Residues 1093 to 1108 (GLHSSPPHAAPLPHAA) show a composition bias toward low complexity. The interval 1093-1134 (GLHSSPPHAAPLPHAAVPTHIPQSLPGASQLHGKGPAVPRKL) is disordered.

It belongs to the ubinuclein family. As to quaternary structure, component of a complex that includes at least ASF1A, CABIN1, HIRA, histone H3.3 and UBN1. Interacts with HIRA (via WD repeat domain); the interaction is direct. Interacts with ASF1A, CEBPA, TJP1, TJP2 and TJP3. In terms of assembly, (Microbial infection) Interacts with Epstein-Barr virus BZLF1. As to expression, ubiquitous. Also expressed in numerous tumors and cancer cell lines.

It is found in the nucleus. The protein resides in the nucleoplasm. Its subcellular location is the PML body. It localises to the cell junction. The protein localises to the tight junction. Acts as a novel regulator of senescence. Involved in the formation of senescence-associated heterochromatin foci (SAHF), which represses expression of proliferation-promoting genes. Binds to proliferation-promoting genes. May be required for replication-independent chromatin assembly. This is Ubinuclein-1 (UBN1) from Homo sapiens (Human).